The following is a 318-amino-acid chain: ZAR1-like protein (318 aa).

Positions 149–211 are disordered; that stretch reads LSDPPEAGQP…PVDSSQPLGR (63 aa). Over residues 155–169 the composition is skewed to pro residues; it reads AGQPPPPLPPPSPPP. The 3CxxC-type zinc finger occupies 219-304; sequence PKYGYFHCKD…QELCGRCKDK (86 aa).

It belongs to the ZAR1 family. In terms of assembly, interacts with YBX2.

It is found in the cytoplasm. It localises to the cytoplasmic ribonucleoprotein granule. In terms of biological role, mRNA-binding protein required for maternal mRNA storage, translation and degradation during oocyte maturation. Probably promotes formation of some phase-separated membraneless compartment that stores maternal mRNAs in oocytes: acts by undergoing liquid-liquid phase separation upon binding to maternal mRNAs. Binds to the 3'-UTR of maternal mRNAs, inhibiting their translation. The chain is ZAR1-like protein (ZAR1L) from Bos taurus (Bovine).